The chain runs to 314 residues: Methionyl-tRNA formyltransferase (314 aa).

113–116 (SLLP) lines the (6S)-5,6,7,8-tetrahydrofolate pocket.

The protein belongs to the Fmt family.

It carries out the reaction L-methionyl-tRNA(fMet) + (6R)-10-formyltetrahydrofolate = N-formyl-L-methionyl-tRNA(fMet) + (6S)-5,6,7,8-tetrahydrofolate + H(+). In terms of biological role, attaches a formyl group to the free amino group of methionyl-tRNA(fMet). The formyl group appears to play a dual role in the initiator identity of N-formylmethionyl-tRNA by promoting its recognition by IF2 and preventing the misappropriation of this tRNA by the elongation apparatus. In Pseudomonas syringae pv. tomato (strain ATCC BAA-871 / DC3000), this protein is Methionyl-tRNA formyltransferase.